The following is a 506-amino-acid chain: AMP phosphorylase (506 aa).

AMP contacts are provided by residues glycine 167, 193–198 (SRAITG), and threonine 202. Residue aspartate 255 is the Proton donor of the active site. The AMP site is built by serine 263 and lysine 287.

The protein belongs to the thymidine/pyrimidine-nucleoside phosphorylase family. Type 2 subfamily.

It carries out the reaction AMP + phosphate = alpha-D-ribose 1,5-bisphosphate + adenine. The enzyme catalyses CMP + phosphate = cytosine + alpha-D-ribose 1,5-bisphosphate. The catalysed reaction is UMP + phosphate = alpha-D-ribose 1,5-bisphosphate + uracil. Catalyzes the conversion of AMP and phosphate to adenine and ribose 1,5-bisphosphate (R15P). Exhibits phosphorylase activity toward CMP and UMP in addition to AMP. Functions in an archaeal AMP degradation pathway, together with R15P isomerase and RubisCO. This is AMP phosphorylase from Methanosarcina acetivorans (strain ATCC 35395 / DSM 2834 / JCM 12185 / C2A).